Consider the following 209-residue polypeptide: Prolactin (209 aa).

An N-terminal signal peptide occupies residues 1-24 (MAQRFKGSNLFLTALLCLASQGHA). Intrachain disulfides connect Cys70–Cys184 and Cys201–Cys209.

The protein belongs to the somatotropin/prolactin family.

It is found in the secreted. The chain is Prolactin (prl) from Anguilla japonica (Japanese eel).